The following is a 387-amino-acid chain: Cysteine desulfurase IscS (387 aa).

Pyridoxal 5'-phosphate contacts are provided by residues 73–74 (AT), asparagine 155, glutamine 183, and 203–205 (SAH). N6-(pyridoxal phosphate)lysine is present on lysine 206. Residue threonine 241 coordinates pyridoxal 5'-phosphate. Cysteine 328 serves as the catalytic Cysteine persulfide intermediate. Cysteine 328 contacts [2Fe-2S] cluster.

The protein belongs to the class-V pyridoxal-phosphate-dependent aminotransferase family. NifS/IscS subfamily. In terms of assembly, homodimer. Forms a heterotetramer with IscU, interacts with other sulfur acceptors. Pyridoxal 5'-phosphate is required as a cofactor.

It localises to the cytoplasm. It catalyses the reaction (sulfur carrier)-H + L-cysteine = (sulfur carrier)-SH + L-alanine. The protein operates within cofactor biosynthesis; iron-sulfur cluster biosynthesis. Functionally, master enzyme that delivers sulfur to a number of partners involved in Fe-S cluster assembly, tRNA modification or cofactor biosynthesis. Catalyzes the removal of elemental sulfur atoms from cysteine to produce alanine. Functions as a sulfur delivery protein for Fe-S cluster synthesis onto IscU, an Fe-S scaffold assembly protein, as well as other S acceptor proteins. The sequence is that of Cysteine desulfurase IscS from Helicobacter pylori (strain ATCC 700392 / 26695) (Campylobacter pylori).